The chain runs to 131 residues: Serum amyloid A-3 protein (131 aa).

Positions 1–18 (MNLSTGIIFCFLILGVSS) are cleaved as a signal peptide. Over residues 94-105 (MTRDQVREDSKA) the composition is skewed to basic and acidic residues. The interval 94-131 (MTRDQVREDSKADQFANEWGRSGKDPNHFRPAGLPDKY) is disordered.

It belongs to the SAA family. In terms of tissue distribution, expressed in the liver. Expressed in mammary epithelial cells. Expressed at high levels in mammary ductal cells and vesicle engorged alveoli, but absent from stromal and connective tissue and leukocytes. Secreted into colostrum and mastitic milk (at protein level). Low expression levels, if any, in normal milk (at protein level).

The protein resides in the secreted. Its function is as follows. Major acute phase reactant. Apolipoprotein of the HDL complex. May have a role in protection of the mammary gland during remodeling and infection. In vitro exhibits antimicrobial activity against Escherichia coli, Streptococcus uberis and Pseudomonas aeruginosa. This chain is Serum amyloid A-3 protein (SAA3), found in Bos taurus (Bovine).